The sequence spans 100 residues: Small ribosomal subunit protein uS14c (100 aa).

It belongs to the universal ribosomal protein uS14 family. In terms of assembly, part of the 30S ribosomal subunit.

It localises to the plastid. The protein resides in the chloroplast. Its function is as follows. Binds 16S rRNA, required for the assembly of 30S particles. This is Small ribosomal subunit protein uS14c from Ceratophyllum demersum (Rigid hornwort).